The sequence spans 995 residues: DExH-box ATP-dependent RNA helicase DExH10 (995 aa).

Residues 1-42 (MSAQMEEPETLGKRKESESSKLRSDETPTPEPRTKRRSLKRA) are disordered. Ser-2 is modified (N-acetylserine). The segment covering 10 to 26 (TLGKRKESESSKLRSDE) has biased composition (basic and acidic residues). Residues 90 to 246 (VACLERKESI…WICYLHKQPC (157 aa)) enclose the Helicase ATP-binding domain. 103 to 110 (AHTSAGKT) contacts ATP. Positions 194–197 (DEIH) match the DEIH box motif. The tract at residues 290–318 (DTFPKPKSNDGKKSANGKSGGRGAKGGGG) is disordered. Residues 307–318 (KSGGRGAKGGGG) are compositionally biased toward gly residues. The region spanning 323–524 (DVYKIVKMIM…LSYYTILNLL (202 aa)) is the Helicase C-terminal domain.

The protein belongs to the DExH box helicase family. SKI2 subfamily. As to expression, expressed in inflorescences, leaves, stems, and roots.

It is found in the nucleus. Its subcellular location is the nucleoplasm. The enzyme catalyses ATP + H2O = ADP + phosphate + H(+). In terms of biological role, ATP-dependent RNA helicase that associates with the RNA exosome complex, with the cap binding complex (CBC) and with the NEXT-like complex. Involved in the degradation of a large number of non-coding nuclear exosome substrates such as snoRNA and miRNA precursors, incompletely spliced mRNAs, and spurious transcripts produced from pseudogenes and intergenic regions. Involved in the maintenance of homeotic B and C gene expression in the reproductive whorls. Regulates floral organ spacing and identity, probably through the regulation of protein synthesis or mRNA degradation. This is DExH-box ATP-dependent RNA helicase DExH10 from Arabidopsis thaliana (Mouse-ear cress).